The primary structure comprises 466 residues: GTPase Der (466 aa).

2 EngA-type G domains span residues P3 to P166 and I177 to T350. GTP is bound by residues G9–S16, D56–I60, N118–D121, G183–S190, D230–V234, and N295–D298. The KH-like domain occupies D351 to D435. The segment at K442 to R466 is disordered. Positions R455–R466 are enriched in basic and acidic residues.

Belongs to the TRAFAC class TrmE-Era-EngA-EngB-Septin-like GTPase superfamily. EngA (Der) GTPase family. In terms of assembly, associates with the 50S ribosomal subunit.

In terms of biological role, GTPase that plays an essential role in the late steps of ribosome biogenesis. The chain is GTPase Der from Cellvibrio japonicus (strain Ueda107) (Pseudomonas fluorescens subsp. cellulosa).